The following is a 286-amino-acid chain: ATP phosphoribosyltransferase (286 aa).

It belongs to the ATP phosphoribosyltransferase family. Long subfamily. Mg(2+) is required as a cofactor.

It is found in the cytoplasm. The enzyme catalyses 1-(5-phospho-beta-D-ribosyl)-ATP + diphosphate = 5-phospho-alpha-D-ribose 1-diphosphate + ATP. The protein operates within amino-acid biosynthesis; L-histidine biosynthesis; L-histidine from 5-phospho-alpha-D-ribose 1-diphosphate: step 1/9. With respect to regulation, feedback inhibited by histidine. Catalyzes the condensation of ATP and 5-phosphoribose 1-diphosphate to form N'-(5'-phosphoribosyl)-ATP (PR-ATP). Has a crucial role in the pathway because the rate of histidine biosynthesis seems to be controlled primarily by regulation of HisG enzymatic activity. The chain is ATP phosphoribosyltransferase from Cytophaga hutchinsonii (strain ATCC 33406 / DSM 1761 / CIP 103989 / NBRC 15051 / NCIMB 9469 / D465).